The chain runs to 150 residues: D-aminoacyl-tRNA deacylase (150 aa).

The Gly-cisPro motif, important for rejection of L-amino acids motif lies at 138–139 (GP).

It belongs to the DTD family. In terms of assembly, homodimer.

It is found in the cytoplasm. The enzyme catalyses glycyl-tRNA(Ala) + H2O = tRNA(Ala) + glycine + H(+). The catalysed reaction is a D-aminoacyl-tRNA + H2O = a tRNA + a D-alpha-amino acid + H(+). An aminoacyl-tRNA editing enzyme that deacylates mischarged D-aminoacyl-tRNAs. Also deacylates mischarged glycyl-tRNA(Ala), protecting cells against glycine mischarging by AlaRS. Acts via tRNA-based rather than protein-based catalysis; rejects L-amino acids rather than detecting D-amino acids in the active site. By recycling D-aminoacyl-tRNA to D-amino acids and free tRNA molecules, this enzyme counteracts the toxicity associated with the formation of D-aminoacyl-tRNA entities in vivo and helps enforce protein L-homochirality. This Porphyromonas gingivalis (strain ATCC 33277 / DSM 20709 / CIP 103683 / JCM 12257 / NCTC 11834 / 2561) protein is D-aminoacyl-tRNA deacylase.